A 570-amino-acid polypeptide reads, in one-letter code: Putative ABC transporter ATP-binding protein SAR2766 (570 aa).

2 consecutive ABC transporter domains span residues 6-247 (ISFK…GIRE) and 304-537 (LELN…ASLR). Residues 40 to 47 (GASGSGKS) and 338 to 345 (GHNGAGKS) contribute to the ATP site.

It belongs to the ABC transporter superfamily.

It localises to the cell membrane. Probably part of an ABC transporter complex. Responsible for energy coupling to the transport system. In Staphylococcus aureus (strain MRSA252), this protein is Putative ABC transporter ATP-binding protein SAR2766.